Consider the following 531-residue polypeptide: Zinc finger protein 837 (531 aa).

Positions 1 to 101 (MEAPAQKAGQ…CGPTSSQNPE (101 aa)) are disordered. Basic and acidic residues predominate over residues 24 to 50 (AREKRPEEPRPLEEDRAGSRPTQKGDL). 8 consecutive C2H2-type zinc fingers follow at residues 271-293 (YACD…QRIH), 299-321 (YECA…QKTH), 363-385 (YECA…RRVH), 391-413 (YACP…QRTH), 419-441 (YACP…QRAH), 447-469 (YGCS…ERLH), 475-497 (YICR…LRTH), and 503-525 (YACG…RKRH).

Belongs to the krueppel C2H2-type zinc-finger protein family.

The protein resides in the nucleus. Its function is as follows. May be involved in transcriptional regulation. In Homo sapiens (Human), this protein is Zinc finger protein 837 (ZNF837).